A 313-amino-acid polypeptide reads, in one-letter code: Porphobilinogen deaminase (313 aa).

At cysteine 242 the chain carries S-(dipyrrolylmethanemethyl)cysteine.

This sequence belongs to the HMBS family. Monomer. Dipyrromethane is required as a cofactor.

The enzyme catalyses 4 porphobilinogen + H2O = hydroxymethylbilane + 4 NH4(+). It participates in porphyrin-containing compound metabolism; protoporphyrin-IX biosynthesis; coproporphyrinogen-III from 5-aminolevulinate: step 2/4. In terms of biological role, tetrapolymerization of the monopyrrole PBG into the hydroxymethylbilane pre-uroporphyrinogen in several discrete steps. The polypeptide is Porphobilinogen deaminase (Escherichia coli O45:K1 (strain S88 / ExPEC)).